Here is a 780-residue protein sequence, read N- to C-terminus: ATP-dependent 6-phosphofructokinase, liver type (780 aa).

Position 2 is an N-acetylalanine (Ala2). Residues 2–390 (AAVDLEKLRA…NWNIYKLLAH (389 aa)) form an N-terminal catalytic PFK domain 1 region. ATP is bound by residues Gly25, 88–89 (RC), and 118–121 (GDGS). A Mg(2+)-binding site is contributed by Asp119. Substrate is bound by residues 164–166 (SID), Arg201, 208–210 (MGR), Glu264, Arg292, and 298–301 (HVQR). Asp166 (proton acceptor) is an active-site residue. Ser377 is subject to Phosphoserine. Residues 391 to 400 (QKPPKEKSNF) form an interdomain linker region. The tract at residues 401 to 780 (SLAILNVGAP…RRTLSMDKGF (380 aa)) is C-terminal regulatory PFK domain 2. Beta-D-fructose 2,6-bisphosphate is bound by residues Arg470, 527–531 (TISNN), Arg565, 572–574 (MGG), and Glu628. Ser529 carries an O-linked (GlcNAc) serine glycan. Position 640 is a phosphotyrosine (Tyr640). Residues Arg654, 660–663 (HLQQ), and Arg734 contribute to the beta-D-fructose 2,6-bisphosphate site. Ser775 is subject to Phosphoserine.

The protein belongs to the phosphofructokinase type A (PFKA) family. ATP-dependent PFK group I subfamily. Eukaryotic two domain clade 'E' sub-subfamily. Homo- and heterotetramers. Phosphofructokinase (PFK) enzyme functions as a tetramer composed of different combinations of 3 types of subunits, called PFKM (where M stands for Muscle), PFKL (Liver) and PFKP (Platelet). The composition of the PFK tetramer differs according to the tissue type it is present in. In muscles, it is composed of 4 PFKM subunits (also called M4). In the liver, the predominant form is a tetramer of PFKL subunits (L4). In erythrocytes, both PFKM and PFKL subunits randomly tetramerize to form M4, L4 and other combinations (ML3, M2L2, M3L). The kinetic and regulatory properties of the tetrameric enzyme are dependent on the subunit composition, hence can vary across tissues. The cofactor is Mg(2+). GlcNAcylation at Ser-529 by OGT decreases enzyme activity, leading to redirect glucose flux through the oxidative pentose phosphate pathway. Glycosylation is stimulated by both hypoxia and glucose deprivation.

It is found in the cytoplasm. The enzyme catalyses beta-D-fructose 6-phosphate + ATP = beta-D-fructose 1,6-bisphosphate + ADP + H(+). The protein operates within carbohydrate degradation; glycolysis; D-glyceraldehyde 3-phosphate and glycerone phosphate from D-glucose: step 3/4. With respect to regulation, allosterically activated by ADP, AMP, or fructose 2,6-bisphosphate, and allosterically inhibited by ATP or citrate. GlcNAcylation by OGT overcomes allosteric regulation. Catalyzes the phosphorylation of D-fructose 6-phosphate to fructose 1,6-bisphosphate by ATP, the first committing step of glycolysis. Negatively regulates the phagocyte oxidative burst in response to bacterial infection by controlling cellular NADPH biosynthesis and NADPH oxidase-derived reactive oxygen species. Upon macrophage activation, drives the metabolic switch toward glycolysis, thus preventing glucose turnover that produces NADPH via pentose phosphate pathway. This is ATP-dependent 6-phosphofructokinase, liver type from Homo sapiens (Human).